The primary structure comprises 94 residues: Pyrimidine/purine nucleoside phosphorylase (94 aa).

Belongs to the nucleoside phosphorylase PpnP family.

It catalyses the reaction a purine D-ribonucleoside + phosphate = a purine nucleobase + alpha-D-ribose 1-phosphate. It carries out the reaction adenosine + phosphate = alpha-D-ribose 1-phosphate + adenine. The catalysed reaction is cytidine + phosphate = cytosine + alpha-D-ribose 1-phosphate. The enzyme catalyses guanosine + phosphate = alpha-D-ribose 1-phosphate + guanine. It catalyses the reaction inosine + phosphate = alpha-D-ribose 1-phosphate + hypoxanthine. It carries out the reaction thymidine + phosphate = 2-deoxy-alpha-D-ribose 1-phosphate + thymine. The catalysed reaction is uridine + phosphate = alpha-D-ribose 1-phosphate + uracil. The enzyme catalyses xanthosine + phosphate = alpha-D-ribose 1-phosphate + xanthine. In terms of biological role, catalyzes the phosphorolysis of diverse nucleosides, yielding D-ribose 1-phosphate and the respective free bases. Can use uridine, adenosine, guanosine, cytidine, thymidine, inosine and xanthosine as substrates. Also catalyzes the reverse reactions. This Cronobacter sakazakii (strain ATCC BAA-894) (Enterobacter sakazakii) protein is Pyrimidine/purine nucleoside phosphorylase.